A 680-amino-acid polypeptide reads, in one-letter code: MSARATRPRSRRGRHPLPGELDPVAESSEEVDTTNGSFETKPELLQEHLGPSLQGPGNRIKEDCDVGSHGVLPLSPEERREPEVEAHQALQEAPLDTGPAEITAPNVYETLKCRLSSLEAVVAAWRRHSLSFSKPVEAEDRDPGAPGSFGNEEEASGPGQQEAAHFIERNAWLRLALGTREEELARTQASLQDAQAENETLQRQVQELEDSLMQLEASPPPSMLRAGRRNSNSSSSGAERRPWAPQDSPMAHPFLQRLRSDSSTQSFGCLSTQRPSPEMYLMEDQMGQLQGNIEKLKCFNRLLLAVLQGYKGRCESLSIKLGKREAEATALHLALQYSKDCEEVYEVLLALKTAGLGAGVGATNGDLQAAEKEASRLLVKKEVAMDVKTPQPSPEGSSVDKPTPEELAAQLHGYVQHLRERWALLKIPPVLDPATAPKPTMPHAEATVQTILEIQPGPTLPQLEKSQIQQDLAATRDGLADLVLRLQLAQREKRGLELREAALRAQGPALRLLLQQLRWEQAHLMGDGSSGGSSEDPSSEEEAGEDRQQHYQGPPALLGGQMGKVWDSETVSQELSASLTRAVDLRAQLQSLRRQLEQMAQKGRTRGAQSAELNRELCKAHSALALAFREAHRKQEEQCRKLEQQMARMQAQQAEELAVLTATARALGDPGAPQPVQTFL.

Residues 1 to 15 are compositionally biased toward basic residues; sequence MSARATRPRSRRGRH. 3 disordered regions span residues 1-101, 135-162, and 217-250; these read MSAR…GPAE, PVEAEDRDPGAPGSFGNEEEASGPGQQE, and ASPPPSMLRAGRRNSNSSSSGAERRPWAPQDSPM. Over residues 76–86 the composition is skewed to basic and acidic residues; that stretch reads PEERREPEVEA. Coiled-coil stretches lie at residues 177–219, 362–386, and 479–506; these read LGTR…EASP, ATNGDLQAAEKEASRLLVKKEVAMD, and LADLVLRLQLAQREKRGLELREAALRAQ. Residues 524–562 are disordered; that stretch reads LMGDGSSGGSSEDPSSEEEAGEDRQQHYQGPPALLGGQM. The stretch at 573 to 661 forms a coiled coil; it reads QELSASLTRA…QQAEELAVLT (89 aa).

It belongs to the MCC family. In terms of assembly, interacts via its C-terminus with the first PDZ domain of USH1C.

In Rattus norvegicus (Rat), this protein is Harmonin-binding protein USHBP1.